Here is a 500-residue protein sequence, read N- to C-terminus: UDP-GalNAc:beta-1,3-N-acetylgalactosaminyltransferase 2 (500 aa).

Residues 1–6 (MRNWLV) are Cytoplasmic-facing. Residues 7–23 (LLCPCVLGAALHLWLRL) form a helical; Signal-anchor for type II membrane protein membrane-spanning segment. Topologically, residues 24 to 500 (RSPPPACASG…CGDPCRCQAR (477 aa)) are lumenal. N-linked (GlcNAc...) asparagine glycans are attached at residues asparagine 116 and asparagine 174.

It belongs to the glycosyltransferase 31 family. Post-translationally, N-glycosylated. As to expression, expressed in all tissues examined, but at highest levels in testis, adipose tissue, skeletal muscle and ovary.

The protein localises to the golgi apparatus membrane. The protein resides in the endoplasmic reticulum. It catalyses the reaction 3-O-(N-acetyl-beta-D-glucosaminyl-(1-&gt;4)-alpha-D-mannosyl)-L-threonyl-[protein] + UDP-N-acetyl-alpha-D-galactosamine = 3-O-[beta-D-GalNAc-(1-&gt;3)-beta-D-GlcNAc-(1-&gt;4)-alpha-D-Man]-L-Thr-[protein] + UDP + H(+). It functions in the pathway protein modification; protein glycosylation. Its function is as follows. Beta-1,3-N-acetylgalactosaminyltransferase that synthesizes a unique carbohydrate structure, GalNAc-beta-1-3GlcNAc, on N- and O-glycans. Has no galactose nor galactosaminyl transferase activity toward any acceptor substrate. Involved in alpha-dystroglycan (DAG1) glycosylation: acts coordinately with GTDC2/POMGnT2 to synthesize a GalNAc-beta3-GlcNAc-beta-terminus at the 4-position of protein O-mannose in the biosynthesis of the phosphorylated O-mannosyl trisaccharide (N-acetylgalactosamine-beta-3-N-acetylglucosamine-beta-4-(phosphate-6-)mannose), a carbohydrate structure present in alpha-dystroglycan, which is required for binding laminin G-like domain-containing extracellular proteins with high affinity. The sequence is that of UDP-GalNAc:beta-1,3-N-acetylgalactosaminyltransferase 2 (B3GALNT2) from Homo sapiens (Human).